We begin with the raw amino-acid sequence, 112 residues long: Class I hydrophobin 17 (112 aa).

A signal peptide spans 1 to 19 (MYSQSMVLLAAAFASFVAA). 4 cysteine pairs are disulfide-bonded: cysteine 30–cysteine 90, cysteine 37–cysteine 84, cysteine 38–cysteine 74, and cysteine 91–cysteine 104. A glycan (N-linked (GlcNAc...) asparagine) is linked at asparagine 108.

Belongs to the fungal hydrophobin family. Self-assembles to form functional amyloid fibrils called rodlets. Self-assembly into fibrillar rodlets occurs spontaneously at hydrophobic:hydrophilic interfaces and the rodlets further associate laterally to form amphipathic monolayers.

Its subcellular location is the secreted. It localises to the cell wall. Its function is as follows. Aerial growth, conidiation, and dispersal of filamentous fungi in the environment rely upon a capability of their secreting small amphipathic proteins called hydrophobins (HPBs) with low sequence identity. Class I can self-assemble into an outermost layer of rodlet bundles on aerial cell surfaces, conferring cellular hydrophobicity that supports fungal growth, development and dispersal; whereas Class II form highly ordered films at water-air interfaces through intermolecular interactions but contribute nothing to the rodlet structure. Hydph17 is a class I hydrophobin involved in mycelial growth. In Pleurotus ostreatus (strain PC15) (Oyster mushroom), this protein is Class I hydrophobin 17.